The following is a 243-amino-acid chain: Terpene cyclase dpmaB (243 aa).

6 helical membrane-spanning segments follow: residues 11 to 31 (PGYL…GLGW), 51 to 71 (ALMP…IYPF), 112 to 132 (LPFI…ALAL), 141 to 161 (AFSA…QLLS), 169 to 189 (SYFL…QDVL), and 207 to 227 (IWFV…LWYV).

The protein belongs to the paxB family.

The protein localises to the membrane. It functions in the pathway secondary metabolite biosynthesis; terpenoid biosynthesis. In terms of biological role, terpene cyclase; part of the gene cluster that mediates the biosynthesis of the diterpenoid pyrones subglutinols A and B. The first step of the pathway is the synthesis of the alpha-pyrone moiety by the polyketide synthase dpmaA via condensation of one acetyl-CoA starter unit with 3 malonyl-CoA units and 2 methylations. The alpha-pyrone is then combined with geranylgeranyl pyrophosphate (GGPP) formed by the GGPP synthase dpmaD through the action of the prenyltransferase dpmaC to yield a linear alpha-pyrone diterpenoid. Subsequent steps in the diterpenoid pyrone biosynthetic pathway involve the decalin core formation, which is initiated by the epoxidation of the C10-C11 olefin by the FAD-dependent oxidoreductase dpmaE, and is followed by a cyclization cascade catalyzed by the terpene cyclase dpmaB. The dehydrogenase dpmaF is then involved in tetrahydrofuran (THF) ring formation at the C5 unit to complete the formation of subglutinols A and B. The sequence is that of Terpene cyclase dpmaB from Metarhizium anisopliae (Entomophthora anisopliae).